An 81-amino-acid polypeptide reads, in one-letter code: Translational regulator CsrA (81 aa).

Positions 59-71 are enriched in polar residues; that stretch reads SQMQHLEQGNFPT. The interval 59–81 is disordered; that stretch reads SQMQHLEQGNFPTSFDDDDFFNR.

The protein belongs to the CsrA/RsmA family. In terms of assembly, homodimer; the beta-strands of each monomer intercalate to form a hydrophobic core, while the alpha-helices form wings that extend away from the core.

Its subcellular location is the cytoplasm. A key translational regulator that binds mRNA to regulate translation initiation and/or mRNA stability. Mediates global changes in gene expression, shifting from rapid growth to stress survival by linking envelope stress, the stringent response and the catabolite repression systems. Usually binds in the 5'-UTR; binding at or near the Shine-Dalgarno sequence prevents ribosome-binding, repressing translation, binding elsewhere in the 5'-UTR can activate translation and/or stabilize the mRNA. Its function is antagonized by small RNA(s). This Psychrobacter sp. (strain PRwf-1) protein is Translational regulator CsrA.